Reading from the N-terminus, the 435-residue chain is Trigger factor (435 aa).

One can recognise a PPIase FKBP-type domain in the interval 161–246 (GKRVSIDFVG…VNKVEARELP (86 aa)).

Belongs to the FKBP-type PPIase family. Tig subfamily.

The protein resides in the cytoplasm. It carries out the reaction [protein]-peptidylproline (omega=180) = [protein]-peptidylproline (omega=0). Its function is as follows. Involved in protein export. Acts as a chaperone by maintaining the newly synthesized protein in an open conformation. Functions as a peptidyl-prolyl cis-trans isomerase. In Vibrio campbellii (strain ATCC BAA-1116), this protein is Trigger factor.